A 164-amino-acid chain; its full sequence is Thioredoxin domain-containing protein R443 (164 aa).

The chain crosses the membrane as a helical span at residues 8-28; the sequence is HIVLIVLAIILILWIISLLLC. Residues 36-163 enclose the Thioredoxin domain; the sequence is YQVPIIQPMQ…LTQFIRSNMN (128 aa). Cysteines 84 and 87 form a disulfide.

This sequence belongs to the thioredoxin family.

It localises to the host membrane. It is found in the virion. The protein is Thioredoxin domain-containing protein R443 of Acanthamoeba polyphaga mimivirus (APMV).